The sequence spans 264 residues: H-2 class II histocompatibility antigen, E-D beta chain (264 aa).

Residues 1–31 (MVWLPRVPCVAAVILLLTVLSPPVALVRDTR) form the signal peptide. Residues 32–121 (PRFLEYVTSE…ISDKFLVRRR (90 aa)) form a beta-1 region. The Extracellular segment spans residues 32 to 225 (PRFLEYVTSE…KAQSTSAQNK (194 aa)). Cystine bridges form between Cys-42/Cys-106 and Cys-144/Cys-200. The N-linked (GlcNAc...) asparagine glycan is linked to Asn-46. The segment at 122–215 (VEPTVTVYPT…SLTDPVTVEW (94 aa)) is beta-2. The 91-residue stretch at 124–214 (PTVTVYPTKT…PSLTDPVTVE (91 aa)) folds into the Ig-like C1-type domain. Residues 216-225 (KAQSTSAQNK) form a connecting peptide region. Residues 226–248 (MLSGVGGFVLGLLFLGAGLFIYF) form a helical membrane-spanning segment. Topologically, residues 249 to 264 (RNQKGQSGLQPTGLLS) are cytoplasmic.

The protein belongs to the MHC class II family.

It localises to the membrane. The protein is H-2 class II histocompatibility antigen, E-D beta chain of Mus musculus (Mouse).